We begin with the raw amino-acid sequence, 320 residues long: NAC domain-containing protein 18 (320 aa).

The disordered stretch occupies residues 1–22 (MESTDSSGGPPPPQPNLPPGFR). Residues 9–18 (GPPPPQPNLP) show a composition bias toward pro residues. Residues 17-177 (LPPGFRFHPT…DWVLCRIYKK (161 aa)) enclose the NAC domain. The DNA-binding element occupies 118–183 (VGVKKALVFY…IYKKNNSTAS (66 aa)).

Restricted primarily to the region of the embryo including the SAM. Expressed in the outer integument, but seems not expressed in the embryo at the torpedo stage.

It is found in the nucleus. May encode a transcription factor involved in the elaboration of shoot apical meristems (SAM). Together with NAC056/NARS1, regulates embryogenesis by regulating the development and degeneration of ovule integuments, a process required for intertissue communication between the embryo and the maternal integument. The protein is NAC domain-containing protein 18 (NAC018) of Arabidopsis thaliana (Mouse-ear cress).